A 537-amino-acid chain; its full sequence is MSILNVIRSHHDVEPQNVEEEPPLTGQTIVTEDKLETSAKDKKHESPSMSEDEEGSVENVDAWDLTKALMSIDPNHPAHPHKWPLWKKLFVATVYTFLEVYVIWSSTACINFFDIYQTNWHCSIQVSYLVQSLFIVGNAFGPMLLGPMSDIFGRKWVYVGSLILYIIFQIPQALAYNLPMMAINSAIAGAFGSSALANVASSMCDIFTPETVGFGISLFVWGANAGASIGSPIGEALYDHWRWFYWMNMIVGGFFVILCVLCPETLPVINIMNYSSTTGEKTVQVSTLAKAKSAVVRTKFVLSTAFKLLCTEPIIMALGLYNGFAYGLIFLYLDGLFPVFVDNYKMGYMGANLTYLNFLVGVTIVVMLQPIQNWLYRWDKRRHGGVARPEARFLISLLTVWFFPAGLFWFAFTSDGRISWVSPLIAGGVLGVGDPQLWLAMINYITDSYPSVAGSAIAAFTLPSFAIAAVLVHLGIIMFDNMTTTWAMATLAFISLSLVATIYVIYFFGHLIRKHSRLAVTQQALQEAHDAKVLPEV.

The disordered stretch occupies residues 10-56 (HHDVEPQNVEEEPPLTGQTIVTEDKLETSAKDKKHESPSMSEDEEGS). Residues 31–46 (TEDKLETSAKDKKHES) show a composition bias toward basic and acidic residues. 12 helical membrane passes run 90-110 (FVAT…TACI), 133-153 (LFIV…DIFG), 156-176 (WVYV…ALAY), 180-200 (MMAI…ANVA), 213-233 (GFGI…GSPI), 243-263 (WFYW…VLCP), 313-333 (PIIM…FLYL), 348-368 (YMGA…VVML), 393-413 (FLIS…FAFT), 422-442 (SPLI…LAMI), 457-477 (IAAF…LGII), and 492-512 (AFIS…GHLI).

Belongs to the major facilitator superfamily. CAR1 family.

It is found in the endoplasmic reticulum. Its subcellular location is the golgi apparatus. It localises to the membrane. This is an uncharacterized protein from Schizosaccharomyces pombe (strain 972 / ATCC 24843) (Fission yeast).